A 364-amino-acid polypeptide reads, in one-letter code: MEVNNRVVVGMSGGVDSSVTAYLLKEQGFEVIGVTMRVWVDPYGKARDDDKSCCSLKAIHDAKKVAEILGIPHYTVNLSEVFYDKIVKYFIDEYLKGRTPNPCVFCNRFIKFGDLLEKAHELGAYYIATGHYVRKEYDEDRKRYLLKKGLDFKKDQSYMLYRLTQEQLKHALFPLGNYTKEEVRALAEKIGLPVADKRESQEICFIPDNDYKAFIKRQIKKDVKPGEFRDIHGNFLGYHKGIINYTIGQRKGLGLSSDRPLYVVDIDPENNVVIVGHQEDVWGEELISSNNNFISIEKLEEEIKVTAKIRYTAKEDEAIIKPYGDDKVLVRFLRPQRAITPGQSVVFYDGDVVVGGGIIEKKVR.

ATP-binding positions include 10-17 (GMSGGVDS) and Met-36. Cys-106 (nucleophile) is an active-site residue. A disulfide bridge links Cys-106 with Cys-204. Gly-130 contacts ATP. The interaction with tRNA stretch occupies residues 154 to 156 (KDQ). Catalysis depends on Cys-204, which acts as the Cysteine persulfide intermediate. The interval 310–311 (RY) is interaction with tRNA.

The protein belongs to the MnmA/TRMU family.

It localises to the cytoplasm. The catalysed reaction is S-sulfanyl-L-cysteinyl-[protein] + uridine(34) in tRNA + AH2 + ATP = 2-thiouridine(34) in tRNA + L-cysteinyl-[protein] + A + AMP + diphosphate + H(+). Catalyzes the 2-thiolation of uridine at the wobble position (U34) of tRNA, leading to the formation of s(2)U34. This Caldanaerobacter subterraneus subsp. tengcongensis (strain DSM 15242 / JCM 11007 / NBRC 100824 / MB4) (Thermoanaerobacter tengcongensis) protein is tRNA-specific 2-thiouridylase MnmA 1.